The following is a 149-amino-acid chain: MFQDPAERPYKLHDLCNEVEESIHEICLNCVYCKQELQRSEVYDFACYDLCIVYREGQPYGVCMKCLKFYSKISEYRWYRYSVYGETLEKQCNKQLCHLLIRCITCQKPLCPVEKQRHLEEKKRFHNIGGRWTGRCMSCWKPTRRETEV.

Zinc fingers lie at residues 30–66 (CVYC…CMKC) and 103–139 (CITC…CMSC). A PDZ-binding domain motif is present at residues 147–149 (TEV).

The protein belongs to the papillomaviridae E6 protein family. Forms homodimers. Interacts with ubiquitin-protein ligase UBE3A/E6-AP and thus forms a complex with human TP53. Interacts with human NFX1 and MAGI3. Interacts with human IRF3; this interaction inhibits the establishment of antiviral state. Interacts with human TYK2; this interaction inhibits JAK-STAT activation by interferon alpha. Interacts with host DLG1; this interaction leads to the proteasomal degradation of DLG1.

Its subcellular location is the host cytoplasm. It localises to the host nucleus. In terms of biological role, this protein may be involved in the oncogenic potential of this virus (associated with cancer of the uterine cervix). Functionally, plays a major role in the induction and maintenance of cellular transformation. Acts mainly as an oncoprotein by stimulating the destruction of many host cell key regulatory proteins. E6 associates with host UBE3A/E6-AP ubiquitin-protein ligase, and inactivates tumor suppressors TP53 and TP73 by targeting them to the 26S proteasome for degradation. In turn, DNA damage and chromosomal instabilities increase and lead to cell proliferation and cancer development. The complex E6/E6AP targets several other substrates to degradation via the proteasome including host DLG1 or NFX1, a repressor of human telomerase reverse transcriptase (hTERT). The resulting increased expression of hTERT prevents the shortening of telomere length leading to cell immortalization. Other cellular targets including BAK1, Fas-associated death domain-containing protein (FADD) and procaspase 8, are degraded by E6/E6AP causing inhibition of apoptosis. E6 also inhibits immune response by interacting with host IRF3 and TYK2. These interactions prevent IRF3 transcriptional activities and inhibit TYK2-mediated JAK-STAT activation by interferon alpha resulting in inhibition of the interferon signaling pathway. In Human papillomavirus 35, this protein is Protein E6.